Reading from the N-terminus, the 307-residue chain is UDP-N-acetylenolpyruvoylglucosamine reductase (307 aa).

Residues 33–197 form the FAD-binding PCMH-type domain; the sequence is TGGNADFYIT…LEAAFTLAPG (165 aa). Arg176 is a catalytic residue. Catalysis depends on Ser226, which acts as the Proton donor. Glu296 is an active-site residue.

The protein belongs to the MurB family. FAD serves as cofactor.

The protein localises to the cytoplasm. The catalysed reaction is UDP-N-acetyl-alpha-D-muramate + NADP(+) = UDP-N-acetyl-3-O-(1-carboxyvinyl)-alpha-D-glucosamine + NADPH + H(+). The protein operates within cell wall biogenesis; peptidoglycan biosynthesis. Functionally, cell wall formation. The protein is UDP-N-acetylenolpyruvoylglucosamine reductase of Staphylococcus aureus (strain NCTC 8325 / PS 47).